A 1331-amino-acid polypeptide reads, in one-letter code: DNA replication ATP-dependent helicase/nuclease JHS1 (1331 aa).

The interval 1–98 (MPPRKKPKSS…DMDQQLTEAS (98 aa)) is disordered. The Nuclear localization signal motif lies at 2–8 (PPRKKPK). Residues 11–31 (ALKSNKQSSANHSSQPSTFGI) are compositionally biased toward polar residues. A compositionally biased stretch (low complexity) spans 40-52 (QNSQSTSNSHTST). Polar residues predominate over residues 57–81 (DQQNVNGLASDTAVLTPQNPLGTSN). Positions 82-91 (EKPDESKDMD) are enriched in basic and acidic residues. Residues 362 to 811 (ECALYLWDEW…CKLRTGDRVI (450 aa)) form a nuclease activity region. 4 residues coordinate [4Fe-4S] cluster: cysteine 422, cysteine 666, cysteine 669, and cysteine 675. Positions 812–1331 (LRTEVSHLTV…LNLLPGDLKP (520 aa)) are helicase activity. One can recognise a UvrD-like helicase ATP-binding domain in the interval 924 to 1271 (NNDQRQAILK…VRSREKPRSS (348 aa)). ATP is bound at residue 945–952 (GMPGTGKT).

The protein belongs to the DNA2/NAM7 helicase family. It depends on [4Fe-4S] cluster as a cofactor. In terms of tissue distribution, strongly expressed in meristems, including both root and shoot apical meristems (RAM and SAM). Also present in the vasculature and in young floral tissues.

It localises to the nucleus. The protein localises to the chromosome. It carries out the reaction ATP + H2O = ADP + phosphate + H(+). In terms of biological role, essential protein required during embryogenesis. Key enzyme involved in DNA replication and damage repair, shoot apical meristem (SAM) maintenance, and development. Involved in Okazaki fragments processing. Possesses different enzymatic activities, such as single-stranded DNA (ssDNA)-dependent ATPase, 5'-3' helicase and endonuclease activities. While the ATPase and endonuclease activities are well-defined and play a key role in Okazaki fragments processing and DSB repair, the 5'-3' DNA helicase activity is atypical: it cannot load onto its tracking strand internally and has an absolute free 5'-end requirement. The protein is DNA replication ATP-dependent helicase/nuclease JHS1 of Arabidopsis thaliana (Mouse-ear cress).